The following is a 657-amino-acid chain: uncharacterized protein (657 aa).

Residues S518 and H631 each act as charge relay system in the active site.

The protein belongs to the peptidase S9C family.

This is an uncharacterized protein from Bacillus subtilis (strain 168).